Reading from the N-terminus, the 197-residue chain is Large ribosomal subunit protein bL25 (197 aa).

It belongs to the bacterial ribosomal protein bL25 family. CTC subfamily. In terms of assembly, part of the 50S ribosomal subunit; part of the 5S rRNA/L5/L18/L25 subcomplex. Contacts the 5S rRNA. Binds to the 5S rRNA independently of L5 and L18.

This is one of the proteins that binds to the 5S RNA in the ribosome where it forms part of the central protuberance. This is Large ribosomal subunit protein bL25 from Citrifermentans bemidjiense (strain ATCC BAA-1014 / DSM 16622 / JCM 12645 / Bem) (Geobacter bemidjiensis).